Here is a 732-residue protein sequence, read N- to C-terminus: Myosin heavy chain kinase B (732 aa).

The Alpha-type protein kinase domain occupies 124 to 328; the sequence is DPYTTTAQWT…ICQYLNLQSI (205 aa). 298–303 provides a ligand contact to ATP; the sequence is GIGNLG. A disordered region spans residues 331 to 428; the sequence is KSEKSDCGTV…TNKERSKSKS (98 aa). The segment covering 356–394 has biased composition (low complexity); it reads NNNNNNNNNNNNNNNNNNSNNNNNNNSSISKSLVEISSG. Over residues 395–404 the composition is skewed to basic and acidic residues; that stretch reads SKERNDRDSP. The span at 405 to 419 shows a compositional bias: polar residues; that stretch reads SRQLFVSNDGNTLNT. WD repeat units lie at residues 458–486, 500–528, 540–568, 580–608, 620–648, 660–688, and 700–730; these read KGYH…RVYD, GHEG…KVWD, GHDK…KVWD, SHAR…KVWD, GHTK…RVWN, GHDR…KIWD, and GHNA…RVWG.

Belongs to the protein kinase superfamily. Alpha-type protein kinase family. ALPK subfamily.

It catalyses the reaction L-threonyl-[myosin heavy-chain] + ATP = O-phospho-L-threonyl-[myosin heavy-chain] + ADP + H(+). Catalyzes its autophosphorylation, which is needed for enzymatic activity and phosphorylates myosin II heavy chain at a threonine in the C-terminal tail region. This phosphorylation is critical in regulating the assembly and disassembly of myosin II filament. Participates in control of myosin localization. This is Myosin heavy chain kinase B (mhkB) from Dictyostelium discoideum (Social amoeba).